We begin with the raw amino-acid sequence, 328 residues long: Glycerol-3-phosphate dehydrogenase [NAD(P)+] (328 aa).

NADPH is bound by residues W11, R30, and K103. Positions 103, 132, and 134 each coordinate sn-glycerol 3-phosphate. An NADPH-binding site is contributed by A136. Sn-glycerol 3-phosphate is bound by residues K187, D240, S250, R251, and N252. K187 (proton acceptor) is an active-site residue. Position 251 (R251) interacts with NADPH. NADPH is bound by residues V275 and E277.

Belongs to the NAD-dependent glycerol-3-phosphate dehydrogenase family.

It localises to the cytoplasm. The catalysed reaction is sn-glycerol 3-phosphate + NAD(+) = dihydroxyacetone phosphate + NADH + H(+). It carries out the reaction sn-glycerol 3-phosphate + NADP(+) = dihydroxyacetone phosphate + NADPH + H(+). The protein operates within membrane lipid metabolism; glycerophospholipid metabolism. In terms of biological role, catalyzes the reduction of the glycolytic intermediate dihydroxyacetone phosphate (DHAP) to sn-glycerol 3-phosphate (G3P), the key precursor for phospholipid synthesis. The sequence is that of Glycerol-3-phosphate dehydrogenase [NAD(P)+] from Aromatoleum aromaticum (strain DSM 19018 / LMG 30748 / EbN1) (Azoarcus sp. (strain EbN1)).